The primary structure comprises 311 residues: Aspartate carbamoyltransferase catalytic subunit (311 aa).

Carbamoyl phosphate-binding residues include R52 and T53. Position 80 (K80) interacts with L-aspartate. 3 residues coordinate carbamoyl phosphate: R102, H131, and Q134. 2 residues coordinate L-aspartate: R164 and R216. Residues A259 and P260 each contribute to the carbamoyl phosphate site.

The protein belongs to the aspartate/ornithine carbamoyltransferase superfamily. ATCase family. As to quaternary structure, heterododecamer (2C3:3R2) of six catalytic PyrB chains organized as two trimers (C3), and six regulatory PyrI chains organized as three dimers (R2).

It carries out the reaction carbamoyl phosphate + L-aspartate = N-carbamoyl-L-aspartate + phosphate + H(+). It functions in the pathway pyrimidine metabolism; UMP biosynthesis via de novo pathway; (S)-dihydroorotate from bicarbonate: step 2/3. In terms of biological role, catalyzes the condensation of carbamoyl phosphate and aspartate to form carbamoyl aspartate and inorganic phosphate, the committed step in the de novo pyrimidine nucleotide biosynthesis pathway. This chain is Aspartate carbamoyltransferase catalytic subunit, found in Lactiplantibacillus plantarum (strain ATCC BAA-793 / NCIMB 8826 / WCFS1) (Lactobacillus plantarum).